A 310-amino-acid chain; its full sequence is Transcriptional regulator NRG1 (310 aa).

The disordered stretch occupies residues 85–131; that stretch reads YYMGPPAQHRLPTPPPYPMSSPTTATAATPLSQQSPHLQPQQTLQQP. Residues 104-131 show a composition bias toward low complexity; sequence SSPTTATAATPLSQQSPHLQPQQTLQQP. C2H2-type zinc fingers lie at residues 228–250 and 256–280; these read HVCKVCSRSFTTSGHLARHNRIH and HQCPWPTCEARFARQDNCNQHYKTH.

It is found in the nucleus. Functionally, transcriptional repressor that binds NRG1 response elements (NRE) of target promoters. Involved in regulation of chlamydospore formation, hyphal growth, virulence, and stress response. Plays a key role in regulating true hyphal growth, but does not regulate pseudohyphal growth in the same fashion. Directs transcriptional repression of a subset of filament-specific genes such as HWP1, HYR1, ALS8, HWP1, or ECE1; via the TUP1 pathway. Functions with UME6 in a negative feedback loop to control the level and duration of filament-specific gene expression in response to inducing conditions. Plays a key role in biofilm formation and dispersion. Also plays the role of a negative regulator of virulence in mice models. Required for the expression of the cell wall genes RBR1. This chain is Transcriptional regulator NRG1 (NRG1), found in Candida albicans (strain SC5314 / ATCC MYA-2876) (Yeast).